The chain runs to 354 residues: NADH-quinone oxidoreductase subunit H (354 aa).

A run of 8 helical transmembrane segments spans residues 25-45 (LVRI…LILW), 91-111 (WIYM…WAVI), 126-146 (LLYA…AGWA), 170-190 (MGFA…SGIV), 205-225 (FLSW…ISGI), 267-287 (IVIS…PFGF), 290-310 (FIPG…VFIW), and 330-350 (IFIP…MSPL).

This sequence belongs to the complex I subunit 1 family. NDH-1 is composed of 14 different subunits. Subunits NuoA, H, J, K, L, M, N constitute the membrane sector of the complex.

The protein localises to the cell inner membrane. It catalyses the reaction a quinone + NADH + 5 H(+)(in) = a quinol + NAD(+) + 4 H(+)(out). NDH-1 shuttles electrons from NADH, via FMN and iron-sulfur (Fe-S) centers, to quinones in the respiratory chain. The immediate electron acceptor for the enzyme in this species is believed to be ubiquinone. Couples the redox reaction to proton translocation (for every two electrons transferred, four hydrogen ions are translocated across the cytoplasmic membrane), and thus conserves the redox energy in a proton gradient. This subunit may bind ubiquinone. In Paraburkholderia xenovorans (strain LB400), this protein is NADH-quinone oxidoreductase subunit H.